The sequence spans 413 residues: Hemolin (413 aa).

A signal peptide spans 1 to 18 (MVSKSIVALAACVAMCVA). 4 consecutive Ig-like C2-type domains span residues 25-112 (PVLK…HIIS), 121-215 (PTTF…LVGY), 233-322 (PMYV…VKLT), and 327-411 (PRFT…TLVI). 4 disulfides stabilise this stretch: Cys-46-Cys-97, Cys-141-Cys-199, Cys-252-Cys-305, and Cys-349-Cys-395. Asn-283 carries an N-linked (GlcNAc...) asparagine glycan.

It belongs to the hemolin family. As to expression, hemolymph.

The protein localises to the secreted. Its function is as follows. Insect-immune protein with antimicrobial activity. Forms a protein complex at the bacterial surface. Can inhibit hemocyte aggregation. The chain is Hemolin from Manduca sexta (Tobacco hawkmoth).